Reading from the N-terminus, the 327-residue chain is Glycerol-3-phosphate dehydrogenase [NAD(P)+] (327 aa).

The NADPH site is built by S10, F11, R31, and K108. Residues K108, G136, and S138 each coordinate sn-glycerol 3-phosphate. A140 contributes to the NADPH binding site. K191, D246, S256, R257, and N258 together coordinate sn-glycerol 3-phosphate. Residue K191 is the Proton acceptor of the active site. Position 257 (R257) interacts with NADPH. NADPH contacts are provided by L281 and E283.

This sequence belongs to the NAD-dependent glycerol-3-phosphate dehydrogenase family.

Its subcellular location is the cytoplasm. The enzyme catalyses sn-glycerol 3-phosphate + NAD(+) = dihydroxyacetone phosphate + NADH + H(+). The catalysed reaction is sn-glycerol 3-phosphate + NADP(+) = dihydroxyacetone phosphate + NADPH + H(+). It functions in the pathway membrane lipid metabolism; glycerophospholipid metabolism. In terms of biological role, catalyzes the reduction of the glycolytic intermediate dihydroxyacetone phosphate (DHAP) to sn-glycerol 3-phosphate (G3P), the key precursor for phospholipid synthesis. The sequence is that of Glycerol-3-phosphate dehydrogenase [NAD(P)+] from Ehrlichia ruminantium (strain Welgevonden).